Here is a 500-residue protein sequence, read N- to C-terminus: Coiled-coil domain-containing protein 85A (500 aa).

Positions 1 to 23 (MSKAAGGSAPAAESCPSAPAGAS) are enriched in low complexity. Residues 1–30 (MSKAAGGSAPAAESCPSAPAGASTPTGVDD) are disordered. Coiled coils occupy residues 38–104 (ELLQ…RDLC) and 132–171 (MHKE…DEEK). Disordered regions lie at residues 200–405 (RDVG…SGMN) and 426–465 (NRML…QPEP). The span at 204–215 (DGSSTSSTGSTD) shows a compositional bias: low complexity. The span at 231-254 (HLQKPRSEGSPEHTKHRSTSPEHL) shows a compositional bias: basic and acidic residues. Residues 372 to 381 (GSGGSGGGSR) are compositionally biased toward gly residues. Over residues 383–395 (GTLRRPAQEDSSS) the composition is skewed to basic and acidic residues. Positions 404–429 (MNESTLSYVRQLEARVRQLEEENRML) form a coiled coil. Positions 434–463 (FRLSSGADGNNSSLNSPASFSGHTTPSQQP) are enriched in polar residues. Position 488 is an asymmetric dimethylarginine (R488).

This sequence belongs to the CCDC85 family. As to quaternary structure, may interact with ARVCF; CTNND1; CTNND2 and PKP4.

It localises to the cell junction. The protein resides in the adherens junction. Its function is as follows. May play a role in cell-cell adhesion and epithelium development through its interaction with proteins of the beta-catenin family. The polypeptide is Coiled-coil domain-containing protein 85A (Ccdc85a) (Mus musculus (Mouse)).